Consider the following 119-residue polypeptide: Large ribosomal subunit protein bL20 (119 aa).

Belongs to the bacterial ribosomal protein bL20 family.

In terms of biological role, binds directly to 23S ribosomal RNA and is necessary for the in vitro assembly process of the 50S ribosomal subunit. It is not involved in the protein synthesizing functions of that subunit. This chain is Large ribosomal subunit protein bL20, found in Dechloromonas aromatica (strain RCB).